Consider the following 689-residue polypeptide: Glycine--tRNA ligase beta subunit (689 aa).

This sequence belongs to the class-II aminoacyl-tRNA synthetase family. In terms of assembly, tetramer of two alpha and two beta subunits.

Its subcellular location is the cytoplasm. The catalysed reaction is tRNA(Gly) + glycine + ATP = glycyl-tRNA(Gly) + AMP + diphosphate. This is Glycine--tRNA ligase beta subunit from Salmonella paratyphi C (strain RKS4594).